A 93-amino-acid chain; its full sequence is UPF0358 protein lwe1048 (93 aa).

It belongs to the UPF0358 family.

This is UPF0358 protein lwe1048 from Listeria welshimeri serovar 6b (strain ATCC 35897 / DSM 20650 / CCUG 15529 / CIP 8149 / NCTC 11857 / SLCC 5334 / V8).